The chain runs to 156 residues: Ribosomal RNA large subunit methyltransferase H (156 aa).

S-adenosyl-L-methionine-binding positions include L73, G104, and 123–128 (LSALTL).

The protein belongs to the RNA methyltransferase RlmH family. In terms of assembly, homodimer.

Its subcellular location is the cytoplasm. The catalysed reaction is pseudouridine(1915) in 23S rRNA + S-adenosyl-L-methionine = N(3)-methylpseudouridine(1915) in 23S rRNA + S-adenosyl-L-homocysteine + H(+). In terms of biological role, specifically methylates the pseudouridine at position 1915 (m3Psi1915) in 23S rRNA. The sequence is that of Ribosomal RNA large subunit methyltransferase H from Shewanella frigidimarina (strain NCIMB 400).